An 860-amino-acid polypeptide reads, in one-letter code: Endo-1,4-beta-xylanase B (860 aa).

The N-terminal stretch at 1–20 (MKFSSANKILFSGLVASANA) is a signal peptide. A GH10 domain is found at 21 to 324 (YDLLKDYAGD…KPVYNTLLNI (304 aa)). The Proton donor role is filled by Glu144. The active-site Nucleophile is Glu255. The cysteines at positions 278 and 284 are disulfide-linked. N-linked (GlcNAc...) asparagine glycans are attached at residues Asn295, Asn309, Asn359, and Asn374. Polar residues-rich tracts occupy residues 330–362 (RPASSSAKTLPGNSKSKTLPGVNSKTLPGNKSK) and 371–418 (LPGN…NSKT). A disordered region spans residues 330–793 (RPASSSAKTL…TKTLPGGACK (464 aa)). The stretch at 375–382 (KSKTLPGG) is repeat 1. The 47 X 8 AA tandem repeats of [SKN]-S-K-T-L-P-G-G stretch occupies residues 375-782 (KSKTLPGGNS…GGKSKTLPGG (408 aa)). Residue Asn390 is glycosylated (N-linked (GlcNAc...) asparagine). Residues 391–398 (KSKTLPGG) form repeat 2. An N-linked (GlcNAc...) asparagine glycan is attached at Asn406. 45 repeat units span residues 415–422 (NSKTLPGG), 431–438 (NSKTLPGG), 439–446 (KSKTLPGG), 447–454 (NSKTLPGG), 455–462 (KSKTLPGG), 463–470 (NSKTLPGG), 471–478 (SSKTLPGG), 479–486 (KSKTLPGG), 487–494 (NSKTLPGG), 495–502 (SSKTLPGG), 503–510 (KSKTLPGG), 511–518 (SSKTLPGG), 519–526 (KSKTLPGG), 527–534 (NSKTLPGG), 535–542 (NSKTLPGG), 543–550 (SSKTLPGG), 551–558 (KSKTLPGG), 559–566 (NSKTLPGG), 567–574 (SSKTLPGG), 575–582 (KSKTLPGG), 583–590 (NSKTLPGG), 591–598 (NSKTLPGG), 599–606 (KSKTLPGG), 607–614 (NSKTLPGG), 615–622 (SSKTLPGG), 623–630 (KSKTLPGG), 631–638 (SSKTLPGG), 639–646 (KSKTLPGG), 647–654 (NSKTLPGG), 655–662 (NSKTLPGG), 663–670 (SSKTLPGG), 671–678 (KSKTLPGG), 679–686 (SSKTLPGG), 687–694 (KSKTLPGG), 695–702 (NSKTLPGG), 703–710 (KSKTLPGG), 711–718 (NSKTLPGG), 719–726 (KSKTLPGG), 727–734 (NSKTLPGG), 735–742 (KSKTLPGG), 743–750 (NSKTLPGG), 751–758 (SSKTLPGG), 759–766 (KSKTLPGG), 767–774 (NSKTLPGG), and 775–782 (KSKTLPGG). Composition is skewed to polar residues over residues 461 to 474 (GGNSKTLPGGSSKT) and 485 to 498 (GGNSKTLPGGSSKT). 4 stretches are compositionally biased toward polar residues: residues 525–546 (GGNSKTLPGGNSKTLPGGSSKT), 557–570 (GGNSKTLPGGSSKT), 581–594 (GGNSKTLPGGNSKT), and 605–618 (GGNSKTLPGGSSKT). Polar residues predominate over residues 645 to 666 (GGNSKTLPGGNSKTLPGGSSKT). Residues 741 to 754 (GGNSKTLPGGSSKT) show a composition bias toward polar residues. One can recognise a CBM1 domain in the interval 824–860 (NCAAKWGQCGGNGFNGPTCCQNGSRCQFVNEWYSQCL). An N-linked (GlcNAc...) asparagine glycan is attached at Asn845.

It belongs to the glycosyl hydrolase 10 (cellulase F) family.

It localises to the secreted. It catalyses the reaction Endohydrolysis of (1-&gt;4)-beta-D-xylosidic linkages in xylans.. Its pathway is glycan degradation; xylan degradation. Endo-1,4-beta-xylanase involved in the hydrolysis of xylan, a major structural heterogeneous polysaccharide found in plant biomass representing the second most abundant polysaccharide in the biosphere, after cellulose. Hydrolyzes both unsubstituted (oat spelts) and highly substituted (rye and wheat) forms of arabinoxylanslans. In Neocallimastix patriciarum (Rumen fungus), this protein is Endo-1,4-beta-xylanase B (xynB).